Here is a 1171-residue protein sequence, read N- to C-terminus: DExH-box ATP-dependent RNA helicase DExH15 chloroplastic (1171 aa).

The N-terminal 58 residues, 1–58 (MNTLPVVSLTASSSFKFFHFPSLHRSLSHSPNFSFTKSLILNPNHLSFKSTLNSLSPS), are a transit peptide targeting the chloroplast. The span at 53 to 62 (NSLSPSQSQL) shows a compositional bias: polar residues. The segment at 53 to 111 (NSLSPSQSQLYEEEDDEEEEEEDEDDDDEAADEYDNISDEIRNSDDDDDDEETEFSVDL) is disordered. Composition is skewed to acidic residues over residues 63–90 (YEEEDDEEEEEEDEDDDDEAADEYDNIS) and 97–107 (DDDDDDEETEF). The region spanning 163 to 327 (IEAFLRGSSV…WIGEIHGKTE (165 aa)) is the Helicase ATP-binding domain. ATP is bound at residue 176 to 183 (APTSSGKT). Residues 275-278 (DEVH) carry the DEVH box motif. The Helicase C-terminal domain maps to 424–620 (QISDTLWHLQ…ASYGMVLNLV (197 aa)).

The protein belongs to the DExH box helicase family.

It localises to the plastid. It is found in the chloroplast. Its subcellular location is the cytoplasmic granule. The catalysed reaction is ATP + H2O = ADP + phosphate + H(+). Functionally, RNA helicase involved in group II intron splicing. Essential protein required during embryogenesis. Involved in post-transcriptional gene silencing. Modulates the determination of cell fate. Necessary for normal plasmodesmata (PD) development and aperture regulation. This Arabidopsis thaliana (Mouse-ear cress) protein is DExH-box ATP-dependent RNA helicase DExH15 chloroplastic (ISE2).